Consider the following 121-residue polypeptide: Mu-hexatoxin-Mg1a (121 aa).

A signal peptide spans 1–20 (MMTLSPFLLLLIAAVVIGNA). Positions 21 to 80 (SEGEVKNEFEERLKDEFKDPSRSEVAEVILLRELEVLEETLFGKEMTSDTEENRNSREKR) are excised as a propeptide. 3 disulfides stabilise this stretch: cysteine 81–cysteine 95, cysteine 88–cysteine 102, and cysteine 94–cysteine 116. Lysine 120 is subject to Lysine amide.

It belongs to the neurotoxin 14 (magi-1) family. 09 (magi-1) subfamily. Expressed by the venom gland.

It is found in the secreted. In terms of biological role, insecticidal neurotoxin. Shows competition for site 3 of insect voltage-gated sodium channels (Nav). Induces flaccid paralysis when injected into lepidopteran larvae. Is not toxic to mice when injected intracranially at 20 pmol/g. In Macrothele gigas (Japanese funnel web spider), this protein is Mu-hexatoxin-Mg1a.